We begin with the raw amino-acid sequence, 349 residues long: Transcription elongation factor A protein 3 (349 aa).

The TFIIS N-terminal domain maps to 5–82 (EELLRIAKKL…RNWKQLLDSP (78 aa)). Residues 80–170 (DSPATPKGEK…RTPSSPSSPT (91 aa)) are disordered. The span at 101 to 110 (KGLDCSDWKP) shows a compositional bias: basic and acidic residues. S115 is modified (phosphoserine). Over residues 121-133 (RVEEPKDRRDSVD) the composition is skewed to basic and acidic residues. Composition is skewed to low complexity over residues 134–144 (SKSSATSSPKR) and 160–170 (PRTPSSPSSPT). S141 bears the Phosphoserine mark. Residues 188-304 (VRDKCVEMLS…EHQMAKTGGT (117 aa)) form the TFIIS central domain. The segment at 307 to 347 (DLFQCSKCKKKNCTYNQVQTRSADEPMTTFVLCNECGNRWK) adopts a TFIIS-type zinc-finger fold. Residues C311, C314, C339, and C342 each contribute to the Zn(2+) site.

Belongs to the TFS-II family.

It localises to the nucleus. Functionally, necessary for efficient RNA polymerase II transcription elongation past template-encoded arresting sites. The arresting sites in DNA have the property of trapping a certain fraction of elongating RNA polymerases that pass through, resulting in locked ternary complexes. Cleavage of the nascent transcript by S-II allows the resumption of elongation from the new 3'-terminus. This Bos taurus (Bovine) protein is Transcription elongation factor A protein 3 (TCEA3).